We begin with the raw amino-acid sequence, 555 residues long: Beta-hexosaminidase A (555 aa).

The N-terminal stretch at 1–18 is a signal peptide; sequence MRLLIPILIFALITTAVT. An N-linked (GlcNAc...) asparagine glycan is attached at N47. E325 acts as the Proton donor in catalysis. 3 N-linked (GlcNAc...) asparagine glycosylation sites follow: N351, N412, and N460.

Belongs to the glycosyl hydrolase 20 family. In terms of tissue distribution, expressed in coelomocytes and neurons of the pharyngeal region and nerve cord.

It localises to the lysosome. It carries out the reaction Hydrolysis of terminal non-reducing N-acetyl-D-hexosamine residues in N-acetyl-beta-D-hexosaminides.. Responsible for the degradation of GM2 gangliosides, and a variety of other molecules containing terminal N-acetyl hexosamines. Degrades chitotriose. The chain is Beta-hexosaminidase A (hex-1) from Caenorhabditis elegans.